We begin with the raw amino-acid sequence, 293 residues long: MANISAALVKELRERTAAGMMDCKKALEEAAGDIELAIENMRKSGQAKAAKKAGRIAAEGVIFARTEGNVAVMIELNCETDFVSKDAGFLAMGQKIVEIAATQKIADVDALKAADFGNGESVELTITNLIAKIGENMNLRRVMLVEGDNLGTYVHGSRIGVITKLAGGSDELAKDLAMHVAANSPQFVKPEDVSAEVVAKEREIQIDIAINSGKPKEIAEKMVEGRMKKFTGEVSLTGQPFVKDPSMTVAELLKKEGADVVSFTRFEVGEGIEKQETDFAAEVAAQIAAAQKA.

Positions 80-83 (TDFV) are involved in Mg(2+) ion dislocation from EF-Tu.

The protein belongs to the EF-Ts family.

The protein resides in the cytoplasm. Functionally, associates with the EF-Tu.GDP complex and induces the exchange of GDP to GTP. It remains bound to the aminoacyl-tRNA.EF-Tu.GTP complex up to the GTP hydrolysis stage on the ribosome. This Aeromonas hydrophila subsp. hydrophila (strain ATCC 7966 / DSM 30187 / BCRC 13018 / CCUG 14551 / JCM 1027 / KCTC 2358 / NCIMB 9240 / NCTC 8049) protein is Elongation factor Ts.